Consider the following 154-residue polypeptide: Ascorbate-specific PTS system EIIA component (154 aa).

The 145-residue stretch at S6–T150 folds into the PTS EIIA type-2 domain. H68 acts as the Tele-phosphohistidine intermediate in catalysis. H68 bears the Phosphohistidine mark.

Its subcellular location is the cytoplasm. In terms of biological role, the phosphoenolpyruvate-dependent sugar phosphotransferase system (sugar PTS), a major carbohydrate active transport system, catalyzes the phosphorylation of incoming sugar substrates concomitantly with their translocation across the cell membrane. The enzyme II UlaABC PTS system is involved in ascorbate transport. The sequence is that of Ascorbate-specific PTS system EIIA component (ulaC) from Salmonella choleraesuis (strain SC-B67).